A 139-amino-acid chain; its full sequence is MKITARRRARECAVQALYSWQLSNNNIADIEAQFLAEQDIKGIDVAYFRELYSGTAIAADMLDQLMVPYLSRPLDKLGHVERAVLRLALYELSKRQDIPYRVAINEAIELAKTFGAEDSYKFINGVLEKTASQIRPHRK.

It belongs to the NusB family.

In terms of biological role, involved in transcription antitermination. Required for transcription of ribosomal RNA (rRNA) genes. Binds specifically to the boxA antiterminator sequence of the ribosomal RNA (rrn) operons. The chain is Transcription antitermination protein NusB from Baumannia cicadellinicola subsp. Homalodisca coagulata.